The primary structure comprises 1389 residues: DNA-directed RNA polymerase subunit beta'' (1389 aa).

Cysteine 224, cysteine 295, cysteine 302, and cysteine 305 together coordinate Zn(2+).

Belongs to the RNA polymerase beta' chain family. RpoC2 subfamily. In terms of assembly, in plastids the minimal PEP RNA polymerase catalytic core is composed of four subunits: alpha, beta, beta', and beta''. When a (nuclear-encoded) sigma factor is associated with the core the holoenzyme is formed, which can initiate transcription. The cofactor is Zn(2+).

It is found in the plastid. Its subcellular location is the chloroplast. The enzyme catalyses RNA(n) + a ribonucleoside 5'-triphosphate = RNA(n+1) + diphosphate. In terms of biological role, DNA-dependent RNA polymerase catalyzes the transcription of DNA into RNA using the four ribonucleoside triphosphates as substrates. The chain is DNA-directed RNA polymerase subunit beta'' from Morus indica (Mulberry).